A 509-amino-acid chain; its full sequence is ATP synthase subunit alpha (509 aa).

169-176 (GDRQTGKT) lines the ATP pocket.

The protein belongs to the ATPase alpha/beta chains family. F-type ATPases have 2 components, CF(1) - the catalytic core - and CF(0) - the membrane proton channel. CF(1) has five subunits: alpha(3), beta(3), gamma(1), delta(1), epsilon(1). CF(0) has three main subunits: a(1), b(2) and c(9-12). The alpha and beta chains form an alternating ring which encloses part of the gamma chain. CF(1) is attached to CF(0) by a central stalk formed by the gamma and epsilon chains, while a peripheral stalk is formed by the delta and b chains.

The protein localises to the cell inner membrane. It catalyses the reaction ATP + H2O + 4 H(+)(in) = ADP + phosphate + 5 H(+)(out). In terms of biological role, produces ATP from ADP in the presence of a proton gradient across the membrane. The alpha chain is a regulatory subunit. The sequence is that of ATP synthase subunit alpha from Methylorubrum populi (strain ATCC BAA-705 / NCIMB 13946 / BJ001) (Methylobacterium populi).